A 174-amino-acid chain; its full sequence is MNRTEKEQVIGELHEKMAKAKAAIVAEPKGLNVAVVTDLRKKLRDAKIDYRIVKNTLAARAAKGTPVEPVADRFVGPTALVMSYDDVVTPAKLLADFMKDRENFVIRTAIIEGKVIDAKGVQALAKMPGLKELRGQIAAMIAQPATKLARLVGTPGQQLARVVGARREQLEKQG.

This sequence belongs to the universal ribosomal protein uL10 family. As to quaternary structure, part of the ribosomal stalk of the 50S ribosomal subunit. The N-terminus interacts with L11 and the large rRNA to form the base of the stalk. The C-terminus forms an elongated spine to which L12 dimers bind in a sequential fashion forming a multimeric L10(L12)X complex.

Its function is as follows. Forms part of the ribosomal stalk, playing a central role in the interaction of the ribosome with GTP-bound translation factors. This Anaeromyxobacter sp. (strain K) protein is Large ribosomal subunit protein uL10.